Consider the following 790-residue polypeptide: Lon protease 2 (790 aa).

A Lon N-terminal domain is found at 18-210; sequence LRILPLRNMV…HVTFYMTRQL (193 aa). Residue 362–369 coordinates ATP; the sequence is GPPGVGKT. Residues 598–779 enclose the Lon proteolytic domain; the sequence is SWGCGIATGL…SDVLQLALLP (182 aa). Active-site residues include S685 and K728.

The protein belongs to the peptidase S16 family. In terms of assembly, homohexamer. Organized in a ring with a central cavity.

It localises to the cytoplasm. It catalyses the reaction Hydrolysis of proteins in presence of ATP.. In terms of biological role, ATP-dependent serine protease that mediates the selective degradation of mutant and abnormal proteins as well as certain short-lived regulatory proteins. Required for cellular homeostasis and for survival from DNA damage and developmental changes induced by stress. Degrades polypeptides processively to yield small peptide fragments that are 5 to 10 amino acids long. Binds to DNA in a double-stranded, site-specific manner. In Syntrophobacter fumaroxidans (strain DSM 10017 / MPOB), this protein is Lon protease 2.